Here is a 98-residue protein sequence, read N- to C-terminus: NADH-ubiquinone oxidoreductase chain 4L (98 aa).

The next 3 membrane-spanning stretches (helical) occupy residues 1–21 (MSMVYANIFLAFIMSLMGLLM), 29–49 (SLLCLEGMMLSLFVMMTVTIL), and 61–81 (IILLVFAACEAALGLSLLVMV).

It belongs to the complex I subunit 4L family. As to quaternary structure, core subunit of respiratory chain NADH dehydrogenase (Complex I) which is composed of 45 different subunits.

Its subcellular location is the mitochondrion inner membrane. The catalysed reaction is a ubiquinone + NADH + 5 H(+)(in) = a ubiquinol + NAD(+) + 4 H(+)(out). Its function is as follows. Core subunit of the mitochondrial membrane respiratory chain NADH dehydrogenase (Complex I) which catalyzes electron transfer from NADH through the respiratory chain, using ubiquinone as an electron acceptor. Part of the enzyme membrane arm which is embedded in the lipid bilayer and involved in proton translocation. The sequence is that of NADH-ubiquinone oxidoreductase chain 4L (MT-ND4L) from Phoca fasciata (Ribbon seal).